Consider the following 452-residue polypeptide: Keratin, type II cytoskeletal 80 (452 aa).

The head stretch occupies residues 1–82 (MACRSCVVGF…DPAVQQLKNQ (82 aa)). A Phosphoserine modification is found at serine 45. The interval 82–118 (QEKEEMKALNDKFASLIGKVQALEQRNQLLETRWSFL) is coil 1A. The region spanning 83 to 394 (EKEEMKALND…KLVEGEEGRM (312 aa)) is the IF rod domain. Residues 119-135 (QGQDSAIFDLGHLYEEY) are linker 1. The coil 1B stretch occupies residues 136–227 (QGRLQEELRK…TIYEQELKDL (92 aa)). Residues 228-251 (AAQVKDVSVTVGMDSRCHIDLSGI) are linker 12. The tract at residues 252–390 (VEEVKAQYDA…ATYRKLVEGE (139 aa)) is coil 2. The tail stretch occupies residues 391-452 (EGRMDSPSAT…YFSQESEVSE (62 aa)). Phosphoserine is present on serine 396. Positions 412–434 (AASRSGLSKAPSRKKKGSKGPVI) are disordered.

The protein belongs to the intermediate filament family. In terms of assembly, heterotetramer of two type I and two type II keratins. In terms of tissue distribution, weakly expressed in tongue, but not skin or in any other tissues or organs examined.

The sequence is that of Keratin, type II cytoskeletal 80 (KRT80) from Homo sapiens (Human).